A 205-amino-acid chain; its full sequence is 7-methyl-GTP pyrophosphatase (205 aa).

Asp-79 (proton acceptor) is an active-site residue.

Belongs to the Maf family. YceF subfamily. A divalent metal cation is required as a cofactor.

The protein resides in the cytoplasm. The enzyme catalyses N(7)-methyl-GTP + H2O = N(7)-methyl-GMP + diphosphate + H(+). Its function is as follows. Nucleoside triphosphate pyrophosphatase that hydrolyzes 7-methyl-GTP (m(7)GTP). May have a dual role in cell division arrest and in preventing the incorporation of modified nucleotides into cellular nucleic acids. This is 7-methyl-GTP pyrophosphatase from Paraburkholderia xenovorans (strain LB400).